The following is a 214-amino-acid chain: Potassium/proton antiporter CemA (214 aa).

The next 2 helical transmembrane spans lie at 92 to 112 (ILHLSTNIICFIIFRGYSILG) and 174 to 194 (IISGLVSTFPVILDTIFKYWI).

It belongs to the CemA family.

It is found in the plastid. It localises to the chloroplast inner membrane. The enzyme catalyses K(+)(in) + H(+)(out) = K(+)(out) + H(+)(in). Functionally, contributes to K(+)/H(+) antiport activity by supporting proton efflux to control proton extrusion and homeostasis in chloroplasts in a light-dependent manner to modulate photosynthesis. Prevents excessive induction of non-photochemical quenching (NPQ) under continuous-light conditions. Indirectly promotes efficient inorganic carbon uptake into chloroplasts. This chain is Potassium/proton antiporter CemA, found in Oenothera argillicola (Appalachian evening primrose).